The chain runs to 172 residues: uncharacterized protein (172 aa).

It belongs to the flavoredoxin family. It depends on FMN as a cofactor.

This is an uncharacterized protein from Pyrococcus horikoshii (strain ATCC 700860 / DSM 12428 / JCM 9974 / NBRC 100139 / OT-3).